The following is a 390-amino-acid chain: MTAVVEAFGKPHVNVGTIGHVDHGKTTLTAAITKHYGNFVAYDQIDKAPEERKRGITIATAHVEYQTEKRHYAHVDCPGHADYVKNMIVGAAQMDAAILVVSGVDGPMPQTREHILLAKQVGVGYIVVYINKADVADADMIDLVEMEVRELLSKYGFPGDEVPVVVGSALKALEDDSSEYGKKSIDKLMEKLDEYVAVPPRPVDLPFLLPIEDVFSISGRGTVVTGRIEKGEIKTGEEIEIIGLKATQKTICTGVEMFKKLLDKGSAGLNVGILLRGTKREEVERGQVLAKPGTITPHRKFKAEVYILKKEEGGRHTPFFANYQPQFYLRTTDVTGSIKLLDGKEMVMPGDNVSVEVELQVPIAMDKGLRFAIREGGRTVGSGVVSEILE.

One can recognise a tr-type G domain in the interval 10-201 (KPHVNVGTIG…LDEYVAVPPR (192 aa)). Residues 19–26 (GHVDHGKT) form a G1 region. Residue 19-26 (GHVDHGKT) participates in GTP binding. Mg(2+) is bound at residue Thr-26. The tract at residues 55-59 (GITIA) is G2. The segment at 76-79 (DCPG) is G3. Residues 76 to 80 (DCPGH) and 131 to 134 (NKAD) each bind GTP. Positions 131-134 (NKAD) are G4. The tract at residues 168 to 170 (SAL) is G5.

The protein belongs to the TRAFAC class translation factor GTPase superfamily. Classic translation factor GTPase family. EF-Tu/EF-1A subfamily. As to quaternary structure, monomer.

It localises to the cytoplasm. The catalysed reaction is GTP + H2O = GDP + phosphate + H(+). Functionally, GTP hydrolase that promotes the GTP-dependent binding of aminoacyl-tRNA to the A-site of ribosomes during protein biosynthesis. The protein is Elongation factor Tu 1 of Wolbachia pipientis wMel.